We begin with the raw amino-acid sequence, 214 residues long: Phosphatidylserine decarboxylase proenzyme (214 aa).

Ser-182 functions as the Schiff-base intermediate with substrate; via pyruvic acid in the catalytic mechanism. Ser-182 is modified (pyruvic acid (Ser); by autocatalysis).

Belongs to the phosphatidylserine decarboxylase family. PSD-A subfamily. Heterodimer of a large membrane-associated beta subunit and a small pyruvoyl-containing alpha subunit. Requires pyruvate as cofactor. In terms of processing, is synthesized initially as an inactive proenzyme. Formation of the active enzyme involves a self-maturation process in which the active site pyruvoyl group is generated from an internal serine residue via an autocatalytic post-translational modification. Two non-identical subunits are generated from the proenzyme in this reaction, and the pyruvate is formed at the N-terminus of the alpha chain, which is derived from the carboxyl end of the proenzyme. The post-translation cleavage follows an unusual pathway, termed non-hydrolytic serinolysis, in which the side chain hydroxyl group of the serine supplies its oxygen atom to form the C-terminus of the beta chain, while the remainder of the serine residue undergoes an oxidative deamination to produce ammonia and the pyruvoyl prosthetic group on the alpha chain.

It is found in the cell membrane. It carries out the reaction a 1,2-diacyl-sn-glycero-3-phospho-L-serine + H(+) = a 1,2-diacyl-sn-glycero-3-phosphoethanolamine + CO2. Its pathway is phospholipid metabolism; phosphatidylethanolamine biosynthesis; phosphatidylethanolamine from CDP-diacylglycerol: step 2/2. Its function is as follows. Catalyzes the formation of phosphatidylethanolamine (PtdEtn) from phosphatidylserine (PtdSer). In Burkholderia lata (strain ATCC 17760 / DSM 23089 / LMG 22485 / NCIMB 9086 / R18194 / 383), this protein is Phosphatidylserine decarboxylase proenzyme.